The chain runs to 415 residues: Gamma-glutamyl phosphate reductase (415 aa).

It belongs to the gamma-glutamyl phosphate reductase family.

Its subcellular location is the cytoplasm. The catalysed reaction is L-glutamate 5-semialdehyde + phosphate + NADP(+) = L-glutamyl 5-phosphate + NADPH + H(+). It functions in the pathway amino-acid biosynthesis; L-proline biosynthesis; L-glutamate 5-semialdehyde from L-glutamate: step 2/2. Functionally, catalyzes the NADPH-dependent reduction of L-glutamate 5-phosphate into L-glutamate 5-semialdehyde and phosphate. The product spontaneously undergoes cyclization to form 1-pyrroline-5-carboxylate. The sequence is that of Gamma-glutamyl phosphate reductase from Listeria innocua serovar 6a (strain ATCC BAA-680 / CLIP 11262).